Consider the following 154-residue polypeptide: Terephthalate 1,2-dioxygenase, terminal oxygenase component subunit beta 1 (154 aa).

Belongs to the bacterial ring-hydroxylating dioxygenase beta subunit family. Heterotetramer composed of 2 alpha (TphA2I and TphA2II) and 2 beta (TphA3I and TphA3II) subunits. Part of a multicomponent enzyme system composed of a reductase (TphA1I or TphA1II) and a two-subunit oxygenase component (TphA2I or TphA2II and TphA3I or TphA3II). Fe cation is required as a cofactor.

The catalysed reaction is terephthalate + NADH + O2 + H(+) = (3S,4R)-3,4-dihydroxycyclohexa-1,5-diene-1,4-dicarboxylate + NAD(+). With respect to regulation, inhibited by EDTA. In terms of biological role, component of the terephthalate 1,2-dioxygenase multicomponent enzyme system which catalyzes the dioxygenation of terephthalate (TER/TPA) to 1,2-dihydroxy-3,5-cyclohexadiene-1,4-dicarboxylic acid (DCD). It can also use 2,5-dicarboxypyridine (PDC) and 1,4-napthalenedicarboxylic acid (NDC) as substrates, and preferentially uses NADPH which is the physiological electron donor. In Comamonas sp, this protein is Terephthalate 1,2-dioxygenase, terminal oxygenase component subunit beta 1 (tphA3I).